The following is an 85-amino-acid chain: Small ribosomal subunit protein bS16 (85 aa).

The protein belongs to the bacterial ribosomal protein bS16 family.

The chain is Small ribosomal subunit protein bS16 from Pelobacter propionicus (strain DSM 2379 / NBRC 103807 / OttBd1).